The primary structure comprises 119 residues: Acidic phospholipase A2 DE-II (119 aa).

7 disulfide bridges follow: C11-C72, C26-C118, C28-C44, C43-C99, C50-C92, C60-C85, and C79-C90. The Ca(2+) site is built by Y27, G29, and G31. The active site involves H47. A Ca(2+)-binding site is contributed by D48. D93 is an active-site residue.

Belongs to the phospholipase A2 family. Group I subfamily. D49 sub-subfamily. It depends on Ca(2+) as a cofactor. As to expression, expressed by the venom gland.

The protein resides in the secreted. The enzyme catalyses a 1,2-diacyl-sn-glycero-3-phosphocholine + H2O = a 1-acyl-sn-glycero-3-phosphocholine + a fatty acid + H(+). Functionally, PLA2 catalyzes the calcium-dependent hydrolysis of the 2-acyl groups in 3-sn-phosphoglycerides. The protein is Acidic phospholipase A2 DE-II of Naja melanoleuca (Forest cobra).